Reading from the N-terminus, the 239-residue chain is 4-hydroxy-tetrahydrodipicolinate reductase (239 aa).

Residues 8-13 (GSTGKM), 78-80 (GTT), and 102-105 (SANM) contribute to the NAD(+) site. The active-site Proton donor/acceptor is His134. His135 is a binding site for (S)-2,3,4,5-tetrahydrodipicolinate. Catalysis depends on Lys138, which acts as the Proton donor. 144–145 (GT) provides a ligand contact to (S)-2,3,4,5-tetrahydrodipicolinate.

This sequence belongs to the DapB family.

The protein localises to the cytoplasm. It carries out the reaction (S)-2,3,4,5-tetrahydrodipicolinate + NAD(+) + H2O = (2S,4S)-4-hydroxy-2,3,4,5-tetrahydrodipicolinate + NADH + H(+). It catalyses the reaction (S)-2,3,4,5-tetrahydrodipicolinate + NADP(+) + H2O = (2S,4S)-4-hydroxy-2,3,4,5-tetrahydrodipicolinate + NADPH + H(+). It participates in amino-acid biosynthesis; L-lysine biosynthesis via DAP pathway; (S)-tetrahydrodipicolinate from L-aspartate: step 4/4. Functionally, catalyzes the conversion of 4-hydroxy-tetrahydrodipicolinate (HTPA) to tetrahydrodipicolinate. This chain is 4-hydroxy-tetrahydrodipicolinate reductase, found in Rickettsia africae (strain ESF-5).